The following is a 198-amino-acid chain: MIISAKFITSLVKFDENLSSNFSEVAFLGRSNVGKSSLINSLCKQKNLAKSSATPGKTQLINFFEVTCKRNEEKFNINFIDLPGFGYAKVSKNLKEIWNQNLDEFLKLRTSIKLFIHLIDSRHTHLEIDVNLNDYLKRFLRPDQKILKVFTKCDKLNQSEKAKLKNEFKDSILVSNLNKFGLDSLEDIIIDQTLGLGK.

The 175-residue stretch at 21-195 (NFSEVAFLGR…EDIIIDQTLG (175 aa)) folds into the EngB-type G domain. GTP is bound by residues 29-36 (GRSNVGKS), 56-60 (GKTQL), 81-84 (DLPG), 151-154 (TKCD), and 174-176 (VSN). Mg(2+) is bound by residues S36 and T58.

It belongs to the TRAFAC class TrmE-Era-EngA-EngB-Septin-like GTPase superfamily. EngB GTPase family. It depends on Mg(2+) as a cofactor.

Functionally, necessary for normal cell division and for the maintenance of normal septation. This Campylobacter jejuni subsp. jejuni serotype O:6 (strain 81116 / NCTC 11828) protein is Probable GTP-binding protein EngB.